We begin with the raw amino-acid sequence, 64 residues long: Disintegrin schistatin (64 aa).

Residues 1–64 (NSVHPCCDPV…PDCPRNRYNV (64 aa)) form the Disintegrin domain. Disulfide bonds link Cys6-Cys29, Cys20-Cys26, Cys25-Cys50, and Cys38-Cys57. The Cell attachment site motif lies at 42 to 44 (RGD).

This sequence belongs to the disintegrin family. Dimeric disintegrin subfamily. As to quaternary structure, homodimer; disulfide-linked. In terms of tissue distribution, expressed by the venom gland.

It localises to the secreted. Functionally, may bind to both alpha-IIb/beta-3 (ITGA2B/ITGB3) and alpha-V/beta-3 (ITGAV/ITGB3) integrins, and may inhibit platelet aggregation. In Echis carinatus (Saw-scaled viper), this protein is Disintegrin schistatin.